The sequence spans 387 residues: 1-deoxy-D-xylulose 5-phosphate reductoisomerase (387 aa).

T10, G11, S12, V13, N38, and N119 together coordinate NADPH. K120 is a 1-deoxy-D-xylulose 5-phosphate binding site. Residue E121 coordinates NADPH. Mn(2+) is bound at residue D145. S146, E147, S170, and H193 together coordinate 1-deoxy-D-xylulose 5-phosphate. Residue E147 participates in Mn(2+) binding. G199 lines the NADPH pocket. 1-deoxy-D-xylulose 5-phosphate-binding residues include S206, N211, K212, and E215. Position 215 (E215) interacts with Mn(2+).

The protein belongs to the DXR family. Mg(2+) serves as cofactor. The cofactor is Mn(2+).

The catalysed reaction is 2-C-methyl-D-erythritol 4-phosphate + NADP(+) = 1-deoxy-D-xylulose 5-phosphate + NADPH + H(+). It participates in isoprenoid biosynthesis; isopentenyl diphosphate biosynthesis via DXP pathway; isopentenyl diphosphate from 1-deoxy-D-xylulose 5-phosphate: step 1/6. Catalyzes the NADPH-dependent rearrangement and reduction of 1-deoxy-D-xylulose-5-phosphate (DXP) to 2-C-methyl-D-erythritol 4-phosphate (MEP). This is 1-deoxy-D-xylulose 5-phosphate reductoisomerase from Wolbachia sp. subsp. Drosophila simulans (strain wRi).